A 749-amino-acid chain; its full sequence is Protein O-mannosyl-transferase 2 (749 aa).

The segment at M1–N30 is disordered. A helical transmembrane segment spans residues N34–Y54. Residues N78, N104, and N117 are each glycosylated (N-linked (GlcNAc...) asparagine). 5 helical membrane passes run Y126 to L146, I173 to I193, S204 to V224, F226 to I246, and I266 to V286. Residues N288 and N312 are each glycosylated (N-linked (GlcNAc...) asparagine). 3 MIR domains span residues P316–H372, L382–V438, and N443–N499. The N-linked (GlcNAc...) asparagine glycan is linked to N443. The next 4 helical transmembrane spans lie at I572–I592, L645–M665, L669–F689, and V703–A723. The N-linked (GlcNAc...) asparagine glycan is linked to N735.

Belongs to the glycosyltransferase 39 family. Interacts with Rt/POMT1.

The protein resides in the endoplasmic reticulum membrane. The enzyme catalyses a di-trans,poly-cis-dolichyl beta-D-mannosyl phosphate + L-seryl-[protein] = 3-O-(alpha-D-mannosyl)-L-seryl-[protein] + a di-trans,poly-cis-dolichyl phosphate + H(+). It carries out the reaction a di-trans,poly-cis-dolichyl beta-D-mannosyl phosphate + L-threonyl-[protein] = 3-O-(alpha-D-mannosyl)-L-threonyl-[protein] + a di-trans,poly-cis-dolichyl phosphate + H(+). The protein operates within protein modification; protein glycosylation. In terms of biological role, rt/POMT1 and tw/POMT2 function as a protein O-mannosyltransferase in association with each other to generate and maintain normal muscle development. This chain is Protein O-mannosyl-transferase 2, found in Drosophila pseudoobscura pseudoobscura (Fruit fly).